We begin with the raw amino-acid sequence, 71 residues long: Brevinin-1SN1 (71 aa).

The N-terminal stretch at 1 to 22 (MFTMKKPLLLLFFLGTINLSLC) is a signal peptide. The propeptide at 23-45 (EEERNADEEEKRDGDDEMDAEVE) is removed in mature form. A disulfide bridge links cysteine 65 with cysteine 71.

The protein belongs to the frog skin active peptide (FSAP) family. Brevinin subfamily. As to expression, expressed by the skin glands.

The protein localises to the secreted. Antimicrobial peptide. Active against some Gram-negative and a variety of Gram-positive bacterial strains. Active against fungus C.glabrata 090902 but not against C.albicans ATCC 10231. Shows hemolytic activity against human erythrocytes. In Sylvirana spinulosa (Fine-spined frog), this protein is Brevinin-1SN1.